A 333-amino-acid polypeptide reads, in one-letter code: tRNA pseudouridine synthase B (333 aa).

The active-site Nucleophile is Asp46.

This sequence belongs to the pseudouridine synthase TruB family. Type 1 subfamily.

The catalysed reaction is uridine(55) in tRNA = pseudouridine(55) in tRNA. Functionally, responsible for synthesis of pseudouridine from uracil-55 in the psi GC loop of transfer RNAs. The chain is tRNA pseudouridine synthase B from Gluconobacter oxydans (strain 621H) (Gluconobacter suboxydans).